The primary structure comprises 255 residues: Borealin-2 (255 aa).

2 disordered regions span residues 1-24 and 107-156; these read MAPR…HSFE and IQKP…STGS. Positions 124–135 are enriched in polar residues; it reads AGQQRSSSQSKT.

It belongs to the borealin family. Component of the CPC complex.

It localises to the nucleus. Its subcellular location is the chromosome. The protein resides in the centromere. In terms of biological role, component of the chromosomal passenger complex (CPC), a complex that acts as a key regulator of mitosis. The CPC complex has essential functions at the centromere in ensuring correct chromosome alignment and segregation and is required for chromatin-induced microtubule stabilization and spindle assembly. The polypeptide is Borealin-2 (cdca9) (Danio rerio (Zebrafish)).